The primary structure comprises 477 residues: Inositol phosphosphingolipids phospholipase C (477 aa).

The Cytoplasmic segment spans residues 1 to 398 (MYNRKDRDVH…QRQKFFRGLH (398 aa)). Residue glutamate 100 coordinates Mg(2+). Histidine 334 acts as the Proton acceptor in catalysis. Residues 399–417 (FWASILLLIASLVVTTFTA) traverse the membrane as a helical segment. The Mitochondrial intermembrane portion of the chain corresponds to 418–424 (NKAGWSS). Residues 425 to 449 (IFWVLFAIAVSISGTIDGAISFLFG) traverse the membrane as a helical segment. Residues 450 to 477 (RSEIRALIEVEQEVLDAEHHLQTFLSEK) are Cytoplasmic-facing.

Belongs to the neutral sphingomyelinase family. Mg(2+) is required as a cofactor.

It localises to the endoplasmic reticulum membrane. The protein resides in the mitochondrion outer membrane. It carries out the reaction an N-acyl-(4R)-4-hydroxysphinganine-1-phosphoinositol + H2O = 1D-myo-inositol 1-phosphate + an N-acyl-(4R)-4-hydroxysphinganine + H(+). The enzyme catalyses a mannosylinositol-1-phospho-N-acyl-sphingoid base + H2O = mannosylinositol-1-phosphate + an N-acyl-sphingoid base + H(+). It catalyses the reaction an inositol phosphomannosylinositol-1-phospho-N-acyl-(4R)-4-hydroxysphinganine + H2O = mannosyldiinositol-1-phosphate + an N-acyl-(4R)-4-hydroxysphinganine + H(+). Its pathway is lipid metabolism; sphingolipid metabolism. Activated through localization to mitochondria in specific growth phases. Responsible for the hydrolysis of the phosphosphingolipids (IPS), inositol phosphorylceramide (IPC), mannosylinositol phosphorylceramide (MIPC), and mannosyldiinositol phosphorylceramide (M(IP)2C). Regulates sphingolipid metabolism in mitochondria, especially the formation of alpha-hydroxylated very long chain phytoceramides. The generated ceramides contribute to the normal function of mitochondria. Also active on sphingomyelin (SM), but this activity is probably not physiologically relevant. The polypeptide is Inositol phosphosphingolipids phospholipase C (Saccharomyces cerevisiae (strain ATCC 204508 / S288c) (Baker's yeast)).